Consider the following 109-residue polypeptide: Co-chaperonin GroES (109 aa).

It belongs to the GroES chaperonin family. As to quaternary structure, heptamer of 7 subunits arranged in a ring. Interacts with the chaperonin GroEL.

The protein resides in the cytoplasm. Its function is as follows. Together with the chaperonin GroEL, plays an essential role in assisting protein folding. The GroEL-GroES system forms a nano-cage that allows encapsulation of the non-native substrate proteins and provides a physical environment optimized to promote and accelerate protein folding. GroES binds to the apical surface of the GroEL ring, thereby capping the opening of the GroEL channel. This chain is Co-chaperonin GroES, found in Methanosarcina acetivorans (strain ATCC 35395 / DSM 2834 / JCM 12185 / C2A).